Here is a 269-residue protein sequence, read N- to C-terminus: Eukaryotic translation initiation factor 3 subunit G-1 (269 aa).

Positions 188–266 constitute an RRM domain; it reads AAIRISNLSE…LILSVEWSKP (79 aa). A Phosphoserine modification is found at Ser-198.

Belongs to the eIF-3 subunit G family. As to quaternary structure, component of the eukaryotic translation initiation factor 3 (eIF-3) complex. The eIF-3 complex interacts with pix.

It localises to the cytoplasm. Functionally, RNA-binding component of the eukaryotic translation initiation factor 3 (eIF-3) complex, which is involved in protein synthesis of a specialized repertoire of mRNAs and, together with other initiation factors, stimulates binding of mRNA and methionyl-tRNAi to the 40S ribosome. The eIF-3 complex specifically targets and initiates translation of a subset of mRNAs involved in cell proliferation. This subunit can bind 18S rRNA. The sequence is that of Eukaryotic translation initiation factor 3 subunit G-1 from Drosophila melanogaster (Fruit fly).